We begin with the raw amino-acid sequence, 542 residues long: MNTFTSNSSDLTSTTKQTLSFSNMYLLTTLQAFVAITLVMLLKKVLVNDTNKKKLSLPPGPTGWPIIGMVPTMLKSRPVFRWLHSIMKQLNTEIACVRLGSTHVITVTCPKIAREVLKQQDALFASRPMTYAQNVLSNGYKTCVITPFGEQFKKMRKVVMTELVCPARHRWLHQKRAEENDHLTAWVYNMVNNSDSVDFRFVTRHYCGNAIKKLMFGTRTFSQNTAPNGGPTAEDIEHMEAMFEALGFTFSFCISDYLPILTGLDLNGHEKIMRDSSAIMDKYHDPIIDARIKMWREGKKTQIEDFLDIFISIKDEEGNPLLTADEIKPTIKELVMAAPDNPSNAVEWAMAEMVNKPEILRKAMEEIDRVVGKERLVQESDIPKLNYVKAILREAFRLHPVAAFNLPHVALSDATVAGYHIPKGSQVLLSRYGLGRNPKVWADPLSFKPERHLNECSEVTLTENDLRFISFSTGKRGCAAPALGTALTTMLLARLLQGFTWKLPENETRVELMESSHDMFLAKPLVMVGELRLPEHLYPTVK.

Residues 21–41 (FSNMYLLTTLQAFVAITLVML) traverse the membrane as a helical segment. Cys478 is a binding site for heme.

Belongs to the cytochrome P450 family. The cofactor is heme.

Its subcellular location is the membrane. Converts tyrosine to para-hydrophenylacetaldoxime in para-hydroxybenzylglucosinolate biosynthesis. This is Cytochrome P450 79B1 (CYP79B1) from Sinapis alba (White mustard).